The sequence spans 88 residues: Small ribosomal subunit protein uS19 (88 aa).

Belongs to the universal ribosomal protein uS19 family.

In terms of biological role, protein S19 forms a complex with S13 that binds strongly to the 16S ribosomal RNA. This is Small ribosomal subunit protein uS19 from Chlamydia caviae (strain ATCC VR-813 / DSM 19441 / 03DC25 / GPIC) (Chlamydophila caviae).